A 356-amino-acid chain; its full sequence is Chorismate synthase (356 aa).

Positions 48 and 54 each coordinate NADP(+). FMN is bound by residues 125–127, 237–238, G281, 296–300, and R322; these read RSS, NA, and KPTSS.

The protein belongs to the chorismate synthase family. As to quaternary structure, homotetramer. FMNH2 serves as cofactor.

It carries out the reaction 5-O-(1-carboxyvinyl)-3-phosphoshikimate = chorismate + phosphate. Its pathway is metabolic intermediate biosynthesis; chorismate biosynthesis; chorismate from D-erythrose 4-phosphate and phosphoenolpyruvate: step 7/7. Its function is as follows. Catalyzes the anti-1,4-elimination of the C-3 phosphate and the C-6 proR hydrogen from 5-enolpyruvylshikimate-3-phosphate (EPSP) to yield chorismate, which is the branch point compound that serves as the starting substrate for the three terminal pathways of aromatic amino acid biosynthesis. This reaction introduces a second double bond into the aromatic ring system. In Novosphingobium aromaticivorans (strain ATCC 700278 / DSM 12444 / CCUG 56034 / CIP 105152 / NBRC 16084 / F199), this protein is Chorismate synthase.